A 208-amino-acid polypeptide reads, in one-letter code: Pyridoxine/pyridoxamine 5'-phosphate oxidase (208 aa).

Residues 53-58 (RTVLLK), 68-69 (YS), Lys-75, and Gln-100 each bind FMN. Lys-58 serves as a coordination point for substrate. Positions 118, 122, and 126 each coordinate substrate. FMN-binding positions include 135 to 136 (QS) and Trp-180. A substrate-binding site is contributed by 186–188 (RLH). Arg-190 lines the FMN pocket.

This sequence belongs to the pyridoxamine 5'-phosphate oxidase family. As to quaternary structure, homodimer. FMN is required as a cofactor.

The enzyme catalyses pyridoxamine 5'-phosphate + O2 + H2O = pyridoxal 5'-phosphate + H2O2 + NH4(+). The catalysed reaction is pyridoxine 5'-phosphate + O2 = pyridoxal 5'-phosphate + H2O2. The protein operates within cofactor metabolism; pyridoxal 5'-phosphate salvage; pyridoxal 5'-phosphate from pyridoxamine 5'-phosphate: step 1/1. It functions in the pathway cofactor metabolism; pyridoxal 5'-phosphate salvage; pyridoxal 5'-phosphate from pyridoxine 5'-phosphate: step 1/1. Its function is as follows. Catalyzes the oxidation of either pyridoxine 5'-phosphate (PNP) or pyridoxamine 5'-phosphate (PMP) into pyridoxal 5'-phosphate (PLP). In Xylella fastidiosa (strain 9a5c), this protein is Pyridoxine/pyridoxamine 5'-phosphate oxidase.